Reading from the N-terminus, the 245-residue chain is 1-(5-phosphoribosyl)-5-[(5-phosphoribosylamino)methylideneamino] imidazole-4-carboxamide isomerase (245 aa).

Residue D7 is the Proton acceptor of the active site. The active-site Proton donor is the D129.

The protein belongs to the HisA/HisF family.

Its subcellular location is the cytoplasm. The catalysed reaction is 1-(5-phospho-beta-D-ribosyl)-5-[(5-phospho-beta-D-ribosylamino)methylideneamino]imidazole-4-carboxamide = 5-[(5-phospho-1-deoxy-D-ribulos-1-ylimino)methylamino]-1-(5-phospho-beta-D-ribosyl)imidazole-4-carboxamide. It participates in amino-acid biosynthesis; L-histidine biosynthesis; L-histidine from 5-phospho-alpha-D-ribose 1-diphosphate: step 4/9. This is 1-(5-phosphoribosyl)-5-[(5-phosphoribosylamino)methylideneamino] imidazole-4-carboxamide isomerase from Escherichia coli O81 (strain ED1a).